A 94-amino-acid chain; its full sequence is MASVGERPAPVPVKDKKLLEVKLGELPSWILMRDFSPSGIFGAFQRGYYRYYNKYINVKKGSISGITMVLACYVLFSYSFSYKHLKHERLRKYH.

Residue Ala-2 is modified to N-acetylalanine. Ser-3 is subject to Phosphoserine. An N6-acetyllysine modification is found at Lys-22. The chain crosses the membrane as a helical span at residues 68-85 (MVLACYVLFSYSFSYKHL).

This sequence belongs to the ATPase F chain family. As to quaternary structure, component of the ATP synthase complex composed at least of ATP5F1A/subunit alpha, ATP5F1B/subunit beta, ATP5MC1/subunit c (homooctomer), MT-ATP6/subunit a, MT-ATP8/subunit 8, ATP5ME/subunit e, ATP5MF/subunit f, ATP5MG/subunit g, ATP5MK/subunit k, ATP5MJ/subunit j, ATP5F1C/subunit gamma, ATP5F1D/subunit delta, ATP5F1E/subunit epsilon, ATP5PF/subunit F6, ATP5PB/subunit b, ATP5PD/subunit d, ATP5PO/subunit OSCP. ATP synthase complex consists of a soluble F(1) head domain (subunits alpha(3) and beta(3)) - the catalytic core - and a membrane F(0) domain - the membrane proton channel (subunits c, a, 8, e, f, g, k and j). These two domains are linked by a central stalk (subunits gamma, delta, and epsilon) rotating inside the F1 region and a stationary peripheral stalk (subunits F6, b, d, and OSCP).

It is found in the mitochondrion. The protein resides in the mitochondrion inner membrane. Subunit f, of the mitochondrial membrane ATP synthase complex (F(1)F(0) ATP synthase or Complex V) that produces ATP from ADP in the presence of a proton gradient across the membrane which is generated by electron transport complexes of the respiratory chain. ATP synthase complex consist of a soluble F(1) head domain - the catalytic core - and a membrane F(1) domain - the membrane proton channel. These two domains are linked by a central stalk rotating inside the F(1) region and a stationary peripheral stalk. During catalysis, ATP synthesis in the catalytic domain of F(1) is coupled via a rotary mechanism of the central stalk subunits to proton translocation. In vivo, can only synthesize ATP although its ATP hydrolase activity can be activated artificially in vitro. Part of the complex F(0) domain. In Pongo abelii (Sumatran orangutan), this protein is ATP synthase F(0) complex subunit f, mitochondrial.